A 388-amino-acid polypeptide reads, in one-letter code: Succinate--CoA ligase [ADP-forming] subunit beta (388 aa).

An ATP-grasp domain is found at 9–244 (KQLFAEFGLP…PSQEDEREAH (236 aa)). ATP-binding positions include Lys-46, 53–55 (GRG), Glu-99, Ser-102, and Glu-107. Positions 199 and 213 each coordinate Mg(2+). Residues Asn-264 and 321–323 (GIV) contribute to the substrate site.

The protein belongs to the succinate/malate CoA ligase beta subunit family. Heterotetramer of two alpha and two beta subunits. Mg(2+) is required as a cofactor.

The enzyme catalyses succinate + ATP + CoA = succinyl-CoA + ADP + phosphate. The catalysed reaction is GTP + succinate + CoA = succinyl-CoA + GDP + phosphate. It participates in carbohydrate metabolism; tricarboxylic acid cycle; succinate from succinyl-CoA (ligase route): step 1/1. Succinyl-CoA synthetase functions in the citric acid cycle (TCA), coupling the hydrolysis of succinyl-CoA to the synthesis of either ATP or GTP and thus represents the only step of substrate-level phosphorylation in the TCA. The beta subunit provides nucleotide specificity of the enzyme and binds the substrate succinate, while the binding sites for coenzyme A and phosphate are found in the alpha subunit. The chain is Succinate--CoA ligase [ADP-forming] subunit beta from Vibrio atlanticus (strain LGP32) (Vibrio splendidus (strain Mel32)).